The sequence spans 384 residues: 4-hydroxy-3-methylbut-2-en-1-yl diphosphate synthase (flavodoxin) (384 aa).

Residues Cys-280, Cys-283, Cys-315, and Glu-322 each coordinate [4Fe-4S] cluster.

Belongs to the IspG family. Requires [4Fe-4S] cluster as cofactor.

The enzyme catalyses (2E)-4-hydroxy-3-methylbut-2-enyl diphosphate + oxidized [flavodoxin] + H2O + 2 H(+) = 2-C-methyl-D-erythritol 2,4-cyclic diphosphate + reduced [flavodoxin]. Its pathway is isoprenoid biosynthesis; isopentenyl diphosphate biosynthesis via DXP pathway; isopentenyl diphosphate from 1-deoxy-D-xylulose 5-phosphate: step 5/6. Its function is as follows. Converts 2C-methyl-D-erythritol 2,4-cyclodiphosphate (ME-2,4cPP) into 1-hydroxy-2-methyl-2-(E)-butenyl 4-diphosphate. This Parafrankia sp. (strain EAN1pec) protein is 4-hydroxy-3-methylbut-2-en-1-yl diphosphate synthase (flavodoxin).